A 293-amino-acid chain; its full sequence is Pyridoxal 5'-phosphate synthase subunit PdxS (293 aa).

Asp-23 contacts D-ribose 5-phosphate. Lys-80 serves as the catalytic Schiff-base intermediate with D-ribose 5-phosphate. Position 152 (Gly-152) interacts with D-ribose 5-phosphate. D-glyceraldehyde 3-phosphate is bound at residue Arg-164. Residues Gly-213 and 234–235 contribute to the D-ribose 5-phosphate site; that span reads GS.

Belongs to the PdxS/SNZ family. As to quaternary structure, in the presence of PdxT, forms a dodecamer of heterodimers.

It catalyses the reaction aldehydo-D-ribose 5-phosphate + D-glyceraldehyde 3-phosphate + L-glutamine = pyridoxal 5'-phosphate + L-glutamate + phosphate + 3 H2O + H(+). The protein operates within cofactor biosynthesis; pyridoxal 5'-phosphate biosynthesis. In terms of biological role, catalyzes the formation of pyridoxal 5'-phosphate from ribose 5-phosphate (RBP), glyceraldehyde 3-phosphate (G3P) and ammonia. The ammonia is provided by the PdxT subunit. Can also use ribulose 5-phosphate and dihydroxyacetone phosphate as substrates, resulting from enzyme-catalyzed isomerization of RBP and G3P, respectively. This chain is Pyridoxal 5'-phosphate synthase subunit PdxS, found in Chloroflexus aurantiacus (strain ATCC 29366 / DSM 635 / J-10-fl).